A 495-amino-acid polypeptide reads, in one-letter code: Internal alternative NAD(P)H-ubiquinone oxidoreductase A1, mitochondrial (495 aa).

A mitochondrion-targeting transit peptide spans 1–41 (MPWFKNLIKISKTITNQSSSYKSITPLASPLLTQFLQFTKQ). 61–91 (RIVVLGSGWAGCRLMKDIDTNIYDVVCVSPR) is an FAD binding site. 228–264 (LHCVVVGGGPTGVEFSGELSDFILKDVHQRYAHVKDY) is a binding site for NAD(+). The Microbody targeting signal motif lies at 486–495 (LVFGRDISRI).

The protein belongs to the NADH dehydrogenase family. Requires FAD as cofactor.

It is found in the mitochondrion inner membrane. It localises to the peroxisome. The enzyme catalyses a quinone + NADH + H(+) = a quinol + NAD(+). The catalysed reaction is a ubiquinone + NADH + H(+) = a ubiquinol + NAD(+). Functionally, alternative NADH-ubiquinone oxidoreductase which catalyzes the oxidation of mitochondrial NADH does not translocate protons across the inner mitochondrial membrane. The sequence is that of Internal alternative NAD(P)H-ubiquinone oxidoreductase A1, mitochondrial (NDA1) from Solanum tuberosum (Potato).